The primary structure comprises 214 residues: Reticulon-3-A (214 aa).

The segment at 1–21 (MAETSGPQSSHISSSSVGEKG) is disordered. Residues 26–214 (VRDLLYWRDV…LPGALKKKSE (189 aa)) enclose the Reticulon domain. A run of 2 helical transmembrane segments spans residues 46–66 (MVLLLSLAAFSIISVISYLVL) and 155–175 (VFNGITLLILGVLLTFTAPIV).

As to quaternary structure, homodimer. As to expression, expressed in the animal hemisphere at the four-cell stage. During gastrulation, expression becomes restricted to the prospective neuroectoderm. At the early tail bud stage, expressed in the head structure. At the tadpole stage, expressed in head and neural tissues including the otic vesicle and optic nerve.

Its subcellular location is the endoplasmic reticulum membrane. It is found in the golgi apparatus membrane. In terms of biological role, may be involved in membrane trafficking in the early secretory pathway. This Xenopus laevis (African clawed frog) protein is Reticulon-3-A (rtn3-a).